A 255-amino-acid polypeptide reads, in one-letter code: Thiazole synthase (255 aa).

Lysine 95 (schiff-base intermediate with DXP) is an active-site residue. Residues glycine 156, 182-183 (AG), and 204-205 (NT) each bind 1-deoxy-D-xylulose 5-phosphate.

Belongs to the ThiG family. As to quaternary structure, homotetramer. Forms heterodimers with either ThiH or ThiS.

The protein resides in the cytoplasm. The enzyme catalyses [ThiS sulfur-carrier protein]-C-terminal-Gly-aminoethanethioate + 2-iminoacetate + 1-deoxy-D-xylulose 5-phosphate = [ThiS sulfur-carrier protein]-C-terminal Gly-Gly + 2-[(2R,5Z)-2-carboxy-4-methylthiazol-5(2H)-ylidene]ethyl phosphate + 2 H2O + H(+). Its pathway is cofactor biosynthesis; thiamine diphosphate biosynthesis. Functionally, catalyzes the rearrangement of 1-deoxy-D-xylulose 5-phosphate (DXP) to produce the thiazole phosphate moiety of thiamine. Sulfur is provided by the thiocarboxylate moiety of the carrier protein ThiS. In vitro, sulfur can be provided by H(2)S. In Aeromonas salmonicida (strain A449), this protein is Thiazole synthase.